We begin with the raw amino-acid sequence, 378 residues long: Erythronate-4-phosphate dehydrogenase (378 aa).

Substrate contacts are provided by S45 and T66. Positions 146 and 175 each coordinate NAD(+). Residue R208 is part of the active site. D232 contacts NAD(+). The active site involves E237. H254 serves as the catalytic Proton donor. G257 contributes to the NAD(+) binding site. Residue Y258 participates in substrate binding.

Belongs to the D-isomer specific 2-hydroxyacid dehydrogenase family. PdxB subfamily. In terms of assembly, homodimer.

It is found in the cytoplasm. The catalysed reaction is 4-phospho-D-erythronate + NAD(+) = (R)-3-hydroxy-2-oxo-4-phosphooxybutanoate + NADH + H(+). It participates in cofactor biosynthesis; pyridoxine 5'-phosphate biosynthesis; pyridoxine 5'-phosphate from D-erythrose 4-phosphate: step 2/5. Its function is as follows. Catalyzes the oxidation of erythronate-4-phosphate to 3-hydroxy-2-oxo-4-phosphonooxybutanoate. In Escherichia fergusonii (strain ATCC 35469 / DSM 13698 / CCUG 18766 / IAM 14443 / JCM 21226 / LMG 7866 / NBRC 102419 / NCTC 12128 / CDC 0568-73), this protein is Erythronate-4-phosphate dehydrogenase.